A 93-amino-acid polypeptide reads, in one-letter code: MNGSQAGAAAQAAWLSSCCNQSASPPEPPEGPRAVQAVVLGVLSLLVLCGVLFLGGGLLLRAQGLTALLTREQRASREPEPGSASGEDGDDDS.

A helical membrane pass occupies residues 38–58; that stretch reads VVLGVLSLLVLCGVLFLGGGL. Basic and acidic residues predominate over residues 71–80; sequence REQRASREPE. The segment at 71–93 is disordered; sequence REQRASREPEPGSASGEDGDDDS.

It localises to the membrane. This chain is Small integral membrane protein 41, found in Homo sapiens (Human).